The chain runs to 400 residues: Acetate kinase (400 aa).

Asn7 provides a ligand contact to Mg(2+). Residue Lys14 coordinates ATP. Residue Arg91 participates in substrate binding. The active-site Proton donor/acceptor is the Asp148. ATP is bound by residues His208–Gly212, Asp283–Arg285, and Gly331–Asn335. Glu385 lines the Mg(2+) pocket.

The protein belongs to the acetokinase family. Homodimer. The cofactor is Mg(2+). Mn(2+) serves as cofactor.

Its subcellular location is the cytoplasm. It carries out the reaction acetate + ATP = acetyl phosphate + ADP. It participates in metabolic intermediate biosynthesis; acetyl-CoA biosynthesis; acetyl-CoA from acetate: step 1/2. Functionally, catalyzes the formation of acetyl phosphate from acetate and ATP. Can also catalyze the reverse reaction. The chain is Acetate kinase from Parabacteroides distasonis (strain ATCC 8503 / DSM 20701 / CIP 104284 / JCM 5825 / NCTC 11152).